Here is a 714-residue protein sequence, read N- to C-terminus: MAIQHKKGGGHRGRGSKTGRSRGRKFETSRLKDVREDESSGGEEDVDGQPTEDMNDSEGTDVSSESGLDEPPKENSYSTLLKLLNTDAKSNEPARKKRKIKANEPDANPVEVSIPTADDTEQMDEVADTEASASEDENMDDEDIPDEDYAEDIGTDGRNDMFELHFGNPDETELSHKIQACSKAWKSTKADLIDGLYSVVSMPDAGGISSASLPTTPSPADLKLKQKLARNAVSFDRLNSCLTPYIFGYHDTLFCSRTTQNSAKLRDLYCLHALNHVLKTRDRVIKNSAILSRENNGDVELRDQGFTRPKVLIILPTRQACVRVINSFTKIYPMEQQENKKRFMDSFSAADSDEWAHKPDDFKELFGGNDDDMFRLGFKFTRKSLKFFSKFYSSDIILASPLGLRTAIEKEGGKKNENDFLSSIEMVIVDHADALMMQNWDHVEYIFSNLNLQPKEAHGCDFSRVRQWYLDGHGKFLRQTLVFSAFNTPELNALYNTQMQNVFGKAKIMSKYEGAMLNLRLPISVKQTFSRFDSASPLKDPEARFQYFTRTVLASLARGWTESSPRKKSGGTLIFIPSYLDFVRVRNHFANSSQTENISFGLISEYTSVRDSSRARSHFMNGRHSVLLYTERAHHFRRYNIRGVTNIVMYGLPDNPIFWGDLIEYLGSAAGGTSTPTVRVLFSKWDALKLERIVGTARVRSMLLEKGGDTFTFV.

Positions 1-23 (MAIQHKKGGGHRGRGSKTGRSRG) are enriched in basic residues. A disordered region spans residues 1 to 145 (MAIQHKKGGG…DENMDDEDIP (145 aa)). Over residues 24–38 (RKFETSRLKDVREDE) the composition is skewed to basic and acidic residues. Residues 118-145 (DDTEQMDEVADTEASASEDENMDDEDIP) show a composition bias toward acidic residues.

This sequence belongs to the UTP25 family. In terms of assembly, component of the ribosomal small subunit (SSU) processome composed of at least 40 protein subunits and snoRNA U3.

The protein resides in the nucleus. Its subcellular location is the nucleolus. In terms of biological role, DEAD-box RNA helicase-like protein required for pre-18S rRNA processing, specifically at sites A0, A1, and A2. This is U3 small nucleolar RNA-associated protein 25 (UTP25) from Trichophyton verrucosum (strain HKI 0517).